Consider the following 478-residue polypeptide: 2,5-dioxopentanoate dehydrogenase (478 aa).

NADP(+) is bound by residues 148–149 (WN), 172–175 (KPAT), and 225–226 (GS). Glu249 functions as the Proton acceptor in the catalytic mechanism. Cys283 functions as the Nucleophile in the catalytic mechanism. NADP(+) is bound at residue Glu379.

It belongs to the aldehyde dehydrogenase family. Homotetramer.

The enzyme catalyses 2,5-dioxopentanoate + NADP(+) + H2O = 2-oxoglutarate + NADPH + 2 H(+). 2,5-dioxopentanoate dehydrogenase involved in the degradation of pentoses such as D-arabinose or D-xylose, a major component of hemicelluloses such as xylan. Catalyzes the fifth reaction in the pentose utilization pathway through dehydratation of 2,5-dioxopentanoate into 2-oxoglutarate. Also shows dehydrogenase activity toward glycolaldehyde and DL-glyceraldehyde. This Saccharolobus solfataricus (strain ATCC 35092 / DSM 1617 / JCM 11322 / P2) (Sulfolobus solfataricus) protein is 2,5-dioxopentanoate dehydrogenase.